Here is a 1007-residue protein sequence, read N- to C-terminus: Inversin-A (1007 aa).

ANK repeat units follow at residues 9–39 (SLAS…VIDQ), 43–72 (LGRT…QVNH), 76–105 (SGRT…DCTH), 109–140 (RDIT…QVDA), 144–173 (RKQT…NIGI), 177–209 (EGKI…TESL), 216–246 (EGRT…NVAP), 250–279 (LFRT…SPNI), 284–313 (QGAT…VRDE), 317–346 (EGRT…ELEV), 352–381 (YGGT…QVDA), 385–414 (MKHT…KVHL), 418–447 (DGRS…NPDA), 451–480 (EGRT…DPNI), 484–513 (NGRT…FPNQ), and 519–549 (ERYT…SIAA). The short motif at 486 to 494 (RTALHWSCN) is the D-box 1 element. The region spanning 551–580 (QDIAASKIQAVYKGHKVRRAFQERKNLLMK) is the IQ 1 domain. Composition is skewed to basic and acidic residues over residues 585–599 (RKGA…ENRQ) and 608–652 (GKQK…HQEE). Disordered regions lie at residues 585–837 (RKGA…KEFS) and 868–893 (SAKS…SALK). Polar residues predominate over residues 684–701 (IQSSPIEHVHTNSIQTRM). Over residues 702–712 (SPSRTSISHSS) the composition is skewed to low complexity. Residues 727-745 (NPTQNNTQPRRTSRPQIES) are compositionally biased toward polar residues. Residues 751–771 (HRIEDLVQKESRRKSHREERK) are compositionally biased toward basic and acidic residues. The segment covering 772-784 (GSHRQRASSHHRL) has biased composition (basic residues). Over residues 870–893 (KSGQRPLTETQSPEKACQGSSALK) the composition is skewed to polar residues. Positions 964–972 (RKQLFQRKK) match the D-box 2 motif. Positions 971–1000 (KKHAATVIQKAWRTYCIRKSSRKTRHSHLR) constitute an IQ 2 domain.

In terms of assembly, interacts with apc2. Binds calmodulin.

It is found in the cytoplasm. The protein resides in the cytoskeleton. In terms of biological role, required for normal renal development and establishment of left-right axis. Probably acts as a molecular switch between different Wnt signaling pathways. Inhibits the canonical Wnt pathway by targeting cytoplasmic disheveled for degradation by the ubiquitin-proteasome. This suggests that it is required in renal development to oppose the repression of terminal differentiation of tubular epithelial cells by Wnt signaling. Plays a central role in convergent extension movements in gastrulating embryos, a processus regulated by Wnt signaling. This Xenopus laevis (African clawed frog) protein is Inversin-A (invs-a).